A 160-amino-acid chain; its full sequence is Phosphoribosyl-ATP pyrophosphatase (160 aa).

This sequence belongs to the PRA-PH family.

The protein resides in the cytoplasm. The enzyme catalyses 1-(5-phospho-beta-D-ribosyl)-ATP + H2O = 1-(5-phospho-beta-D-ribosyl)-5'-AMP + diphosphate + H(+). The protein operates within amino-acid biosynthesis; L-histidine biosynthesis; L-histidine from 5-phospho-alpha-D-ribose 1-diphosphate: step 2/9. The chain is Phosphoribosyl-ATP pyrophosphatase from Granulibacter bethesdensis (strain ATCC BAA-1260 / CGDNIH1).